A 567-amino-acid chain; its full sequence is Delta(24)-sterol reductase (567 aa).

Residues 1–24 are Lumenal-facing; the sequence is MSDLEAPLRPKRKKIWVDYFVKFR. Residues 25 to 45 form a helical; Signal-anchor membrane-spanning segment; that stretch reads WILVIFVVLPISFTLYFLTYL. Residues 45 to 231 form the FAD-binding PCMH-type domain; the sequence is LGDVRSEWKS…VAAEVKLIPI (187 aa). Over 46-567 the chain is Cytoplasmic; sequence GDVRSEWKSF…AYPEVDQPPD (522 aa). Residues 520–541 form an interaction with calmodulin region; that stretch reads CRRKYGAVGTFMSVYYKCKKGR. The segment at 548-567 is disordered; sequence REAEQAHLDTAYPEVDQPPD.

This sequence belongs to the DIMINUTO family. As to expression, highly expressed in the apical region and root tips and lower levels in immature and mature internodes and leaves.

Its subcellular location is the membrane. The catalysed reaction is lathosterol + NADP(+) = 5alpha-cholesta-7,24-dien-3beta-ol + NADPH + H(+). Its function is as follows. Plays a critical role in the general process of plant cell elongation. In Pisum sativum (Garden pea), this protein is Delta(24)-sterol reductase (DIM).